We begin with the raw amino-acid sequence, 213 residues long: Ergothioneine transport ATP-binding protein EgtV (213 aa).

The ABC transporter domain maps to 5–212; that stretch reads VTIENVSFNY…ATKTLEIKAL (208 aa). 37-44 lines the ATP pocket; the sequence is GESGSGKS.

Belongs to the ABC transporter superfamily. As to quaternary structure, the complex is composed of two ATP-binding proteins (EgtV) and two transmembrane proteins (EgtU).

It localises to the cell inner membrane. It carries out the reaction ergothioneine(out) + ATP + H2O = ergothioneine(in) + ADP + phosphate + H(+). Part of the ABC transporter complex EgtUV involved in the uptake of ergothioneine (EGT), a natural low-molecular weight (LMW) thiol antioxidant which protects H.pylori against bleach stress. Responsible for energy coupling to the transport system. This is Ergothioneine transport ATP-binding protein EgtV from Helicobacter pylori (strain G27).